The following is a 274-amino-acid chain: uncharacterized protein (274 aa).

Residues 3-141 (IFIPKARRPT…TIRIGISLKQ (139 aa)) form the C2 NT-type domain.

To yeast YBL086c.

This is an uncharacterized protein from Schizosaccharomyces pombe (strain 972 / ATCC 24843) (Fission yeast).